We begin with the raw amino-acid sequence, 456 residues long: Adenylosuccinate lyase (456 aa).

Residues 15–16 and 90–92 contribute to the N(6)-(1,2-dicarboxyethyl)-AMP site; these read RY and NHD. K94 carries the post-translational modification N6-acetyllysine. Position 122-123 (122-123) interacts with N(6)-(1,2-dicarboxyethyl)-AMP; the sequence is TS. H171 serves as the catalytic Proton donor/acceptor. Residue Q247 coordinates N(6)-(1,2-dicarboxyethyl)-AMP. S295 acts as the Proton donor/acceptor in catalysis. N(6)-(1,2-dicarboxyethyl)-AMP-binding positions include S296, 301–303, N309, R335, and 340–344; these read KVN and STVLR. K366 carries the N6-acetyllysine modification.

It belongs to the lyase 1 family. Adenylosuccinate lyase subfamily. As to quaternary structure, homotetramer. Residues from neighboring subunits contribute catalytic and substrate-binding residues to each active site.

It catalyses the reaction N(6)-(1,2-dicarboxyethyl)-AMP = fumarate + AMP. The enzyme catalyses (2S)-2-[5-amino-1-(5-phospho-beta-D-ribosyl)imidazole-4-carboxamido]succinate = 5-amino-1-(5-phospho-beta-D-ribosyl)imidazole-4-carboxamide + fumarate. Its pathway is purine metabolism; AMP biosynthesis via de novo pathway; AMP from IMP: step 2/2. It participates in purine metabolism; IMP biosynthesis via de novo pathway; 5-amino-1-(5-phospho-D-ribosyl)imidazole-4-carboxamide from 5-amino-1-(5-phospho-D-ribosyl)imidazole-4-carboxylate: step 2/2. Its function is as follows. Catalyzes two reactions in de novo purine nucleotide biosynthesis. Catalyzes the breakdown of 5-aminoimidazole- (N-succinylocarboxamide) ribotide (SAICAR or 2-[5-amino-1-(5-phospho-beta-D-ribosyl)imidazole-4-carboxamido]succinate) to 5-aminoimidazole-4-carboxamide ribotide (AICAR or 5-amino-1-(5-phospho-beta-D-ribosyl)imidazole-4-carboxamide) and fumarate, and of adenylosuccinate (ADS or N(6)-(1,2-dicarboxyethyl)-AMP) to adenosine monophosphate (AMP) and fumarate. This is Adenylosuccinate lyase (purB) from Escherichia coli O6:H1 (strain CFT073 / ATCC 700928 / UPEC).